The following is a 264-amino-acid chain: Thymidylate synthase (264 aa).

Arg-21 provides a ligand contact to dUMP. His-51 lines the (6R)-5,10-methylene-5,6,7,8-tetrahydrofolate pocket. DUMP is bound at residue 126-127 (RR). Residue Cys-146 is the Nucleophile of the active site. DUMP-binding positions include 166-169 (RSAD), Asn-177, and 207-209 (HLY). (6R)-5,10-methylene-5,6,7,8-tetrahydrofolate is bound at residue Asp-169. Ala-263 contributes to the (6R)-5,10-methylene-5,6,7,8-tetrahydrofolate binding site.

Belongs to the thymidylate synthase family. Bacterial-type ThyA subfamily. In terms of assembly, homodimer.

The protein resides in the cytoplasm. The enzyme catalyses dUMP + (6R)-5,10-methylene-5,6,7,8-tetrahydrofolate = 7,8-dihydrofolate + dTMP. The protein operates within pyrimidine metabolism; dTTP biosynthesis. Its function is as follows. Catalyzes the reductive methylation of 2'-deoxyuridine-5'-monophosphate (dUMP) to 2'-deoxythymidine-5'-monophosphate (dTMP) while utilizing 5,10-methylenetetrahydrofolate (mTHF) as the methyl donor and reductant in the reaction, yielding dihydrofolate (DHF) as a by-product. This enzymatic reaction provides an intracellular de novo source of dTMP, an essential precursor for DNA biosynthesis. The sequence is that of Thymidylate synthase from Methylorubrum extorquens (strain CM4 / NCIMB 13688) (Methylobacterium extorquens).